The sequence spans 374 residues: RNA polymerase sigma factor SigA (374 aa).

The interval 141–211 (LAEANLRLVV…TRAIADQART (71 aa)) is sigma-70 factor domain-2. The short motif at 165 to 168 (DLIQ) is the Interaction with polymerase core subunit RpoC element. The segment at 220-296 (ETINKLIRVQ…DQDATSPSDH (77 aa)) is sigma-70 factor domain-3. Positions 309–362 (VLDTLTDREENVLRLRFGLDDGRTRTLEEVGRVFGVTRERIRQIEAKALRKLRH) are sigma-70 factor domain-4. Residues 335-354 (LEEVGRVFGVTRERIRQIEA) constitute a DNA-binding region (H-T-H motif).

It belongs to the sigma-70 factor family. RpoD/SigA subfamily. As to quaternary structure, interacts transiently with the RNA polymerase catalytic core.

It is found in the cytoplasm. Its function is as follows. Sigma factors are initiation factors that promote the attachment of RNA polymerase to specific initiation sites and are then released. This sigma factor is the primary sigma factor during exponential growth. The polypeptide is RNA polymerase sigma factor SigA (Listeria monocytogenes serovar 1/2a (strain ATCC BAA-679 / EGD-e)).